The chain runs to 171 residues: Methylated-DNA--protein-cysteine methyltransferase (171 aa).

C139 acts as the Nucleophile; methyl group acceptor in catalysis.

This sequence belongs to the MGMT family.

It is found in the cytoplasm. The enzyme catalyses a 6-O-methyl-2'-deoxyguanosine in DNA + L-cysteinyl-[protein] = S-methyl-L-cysteinyl-[protein] + a 2'-deoxyguanosine in DNA. It carries out the reaction a 4-O-methyl-thymidine in DNA + L-cysteinyl-[protein] = a thymidine in DNA + S-methyl-L-cysteinyl-[protein]. In terms of biological role, involved in the cellular defense against the biological effects of O6-methylguanine (O6-MeG) and O4-methylthymine (O4-MeT) in DNA. Repairs the methylated nucleobase in DNA by stoichiometrically transferring the methyl group to a cysteine residue in the enzyme. This is a suicide reaction: the enzyme is irreversibly inactivated. The protein is Methylated-DNA--protein-cysteine methyltransferase of Shigella flexneri.